We begin with the raw amino-acid sequence, 297 residues long: tRNA pseudouridine synthase B (297 aa).

The active-site Nucleophile is D39.

The protein belongs to the pseudouridine synthase TruB family. Type 1 subfamily.

It catalyses the reaction uridine(55) in tRNA = pseudouridine(55) in tRNA. Responsible for synthesis of pseudouridine from uracil-55 in the psi GC loop of transfer RNAs. The polypeptide is tRNA pseudouridine synthase B (Lactobacillus acidophilus (strain ATCC 700396 / NCK56 / N2 / NCFM)).